A 699-amino-acid chain; its full sequence is MSHEDRGGDYYPMMDDPEDRNFIQAKYPNSTGHMSSGGGSNHMSFDDNHGIEMLRDDEHSLLHESPVSIPAIHNLDSFLTDVYNYFRGKGFMCIFFNDLFELVSSLFVVLFFTFLVCFVDYSKLFSEQMPPPALRESVNFSAPIPIWLMVFLVIFSLYWLSKLFSFFSSIKTNWEISSFYKNTLKINEDDIQTIEWREVVSKIVLVPRLCIVKENMNALDIANRIMRKENYIIGLINQRILNLSIPFPFLRNLTFITKTLEWSLMYSLFNYIFDENGIIKSEFQDPTQRKRLSRGLSRRFMTIGILGLFTTPFIFFFLLINFFFEYAEELKNRPGSLFSREWSPLARWEFRELNELPHYFQNRLNLSYSHANQYVESFPSQMLSTIAKFISFLFGSVLAVFIVLGIVSDHFIMNYQIFDRTPIWYIGILGTIVAITRSLIVDENQVFQPAKHMARTVQNTHYLPMSWVGKTHTHKVRDEFLVLFEYRIVDFVRDIFSVLFTPFILIFSLPKSSQAIIDFFGNNTVVLEGVGPICQLGDFSNIRKLGDNSFGSLNHSQNKISLTNNAKLEKSIINFKCLNPEWNTDNNELLQNLNEFSKIKNNNNNNNNNGSNNHIGNHSQLPTTSVDDFQFIHDSHYIPHEIIDAVLGTHHHSQQSNNNAPRFKTGRVDQNILNAVNDLHQSFYESQYKHKNDNFVNSI.

The Cytoplasmic portion of the chain corresponds to 1 to 98 (MSHEDRGGDY…KGFMCIFFND (98 aa)). The chain crosses the membrane as a helical span at residues 99–119 (LFELVSSLFVVLFFTFLVCFV). Over 120 to 139 (DYSKLFSEQMPPPALRESVN) the chain is Lumenal. A glycan (N-linked (GlcNAc...) asparagine) is linked at N139. A helical transmembrane segment spans residues 140–160 (FSAPIPIWLMVFLVIFSLYWL). Over 161–299 (SKLFSFFSSI…KRLSRGLSRR (139 aa)) the chain is Cytoplasmic. The stretch at 300 to 320 (FMTIGILGLFTTPFIFFFLLI) is an intramembrane region. At 321–385 (NFFFEYAEEL…ESFPSQMLST (65 aa)) the chain is on the cytoplasmic side. A helical transmembrane segment spans residues 386–406 (IAKFISFLFGSVLAVFIVLGI). At 407–420 (VSDHFIMNYQIFDR) the chain is on the lumenal side. A helical membrane pass occupies residues 421-441 (TPIWYIGILGTIVAITRSLIV). The Cytoplasmic portion of the chain corresponds to 442-487 (DENQVFQPAKHMARTVQNTHYLPMSWVGKTHTHKVRDEFLVLFEYR). The stretch at 488-508 (IVDFVRDIFSVLFTPFILIFS) is an intramembrane region. Residues 509 to 699 (LPKSSQAIID…HKNDNFVNSI (191 aa)) lie on the Cytoplasmic side of the membrane. The segment covering 599–618 (IKNNNNNNNNNGSNNHIGNH) has biased composition (low complexity). Residues 599–620 (IKNNNNNNNNNGSNNHIGNHSQ) are disordered.

Belongs to the ATG9 family. Homotrimer; forms a homotrimer with a central pore that forms a path between the two membrane leaflets.

It localises to the preautophagosomal structure membrane. It is found in the cytoplasmic vesicle membrane. The enzyme catalyses a 1,2-diacyl-sn-glycero-3-phosphocholine(in) = a 1,2-diacyl-sn-glycero-3-phosphocholine(out). It catalyses the reaction a 1,2-diacyl-sn-glycero-3-phospho-L-serine(in) = a 1,2-diacyl-sn-glycero-3-phospho-L-serine(out). The catalysed reaction is a 1,2-diacyl-sn-glycero-3-phosphoethanolamine(in) = a 1,2-diacyl-sn-glycero-3-phosphoethanolamine(out). Phospholipid scramblase involved in autophagy by mediating autophagosomal membrane expansion. Cycles between the preautophagosomal structure/phagophore assembly site (PAS) and the cytoplasmic vesicle pool and supplies membrane for the growing autophagosome. Lipid scramblase activity plays a key role in preautophagosomal structure/phagophore assembly by distributing the phospholipids that arrive through ATG2 from the cytoplasmic to the luminal leaflet of the bilayer, thereby driving autophagosomal membrane expansion. Required for lipopolysaccharide (LPS)-enhanced bacterial clearance through the autophagic pathway. The protein is Autophagy-related protein 9 (atg9) of Dictyostelium discoideum (Social amoeba).